The primary structure comprises 1358 residues: MSYSYAEKKRIRKEFGVLPHILDVPYLLSIQTESYKKFLTADAAKGRLHSGLEIVLKQSFPVESKNGQYELHYVDYQIGEPTFDETECQVRGATYDAPLNVKLRLVVYNKDALPNEKIVEDIREEYVYMGDIPLMTTNGTFIINGTERVVVSQLHRSPGVFFSKDDSEEGAFSARIIPYRGSWLDFEFDSKGIIWARIDRKRKFCATVILKALGYTQEQILENFSESKTITSNSKGFALRLDSLSNMKGELLKFDIVDAQDYVIVKKNKKLTSRDVKKIKDAGVDSVAIDFDLVSTLRVAKDIVNEATGEVIAYANDDVTESLLESCVEVGLLELEVIDFITTERGRYISDTLKYDLTRNTDEALVEIYKVLRPGDPPAAASVKALFEGLFFIESRYSLSDIGRMKLNARLGSDKVSKDIYTLENSDIVGVIEELINIRDGKGKVDDIDHLGNRRVRSVGEMVENQFRIGLYRVEKGIRESMSLVHKDKLMPKDIVNSKPITAAIKEFFTSGALSQFMDQDNPLSEVTHKRRISALGPGGLSRDRAGFEVRDVHATHYGRLCPIETPEGPNIGLINSLASYARVNDYGFLEAPYRKVVDGKVTDEIEYLSAIDEDNYVIAQASTKLDENNYFVEDLIQCRSGGEAIFTESSRVQYMDVSAKQMVSAAAALIPFLEHDDANRVLMGANMQRQAVPTLKSEKPLVGTGMEKIVARDSGNCIIARNAGEVAEVDSNRIVIKVDTEKSQTSNLVDIYSLTKFKRSNKNTCINQRPIVNVGDKVEAGDILADGFAADFGELSLGHNLMVAFMPWNGYNFEDSILLSERIVKDDKYTSIHIEEFTCVARDTKLGPEEITADIPNVSESSLAKLDESGIVHIGANVEAGDILVAKITPKAEQQLTPEERLLRAIFNEKASNVADSSLRMPSGTSGTVINVQVFENDKGGKSKRALKIEKELIDKARKDFDEEFAVIESVVKSSIEQEVVGAKIQKAKGLKKGAILTKEFLATLPFSKWLEISFEDEKLEEKVQNAREYYEEAKIAIDAKFEAKKKSITQSNELSPGVLKTVKVFVAIKKRIQPGDKMAGRHGNKGVVSRVLPVEDMPYMEDGTPVDVCLNPLGIPSRMNIGQILEAHLGLASYGLGKKIEKTLEKTRKAAELRKTLEEIYNSVGDKKVNLEALNDEEILTLCDNLKGGVPIATPVFDGAKEEDIKSLLKIGGFATNGQMKLFDGRTGKPFDRHVTVGYMYMLKLDHLVDDKMHARSTGSYSLVTQQPLGGKAQFGGQRFGEMEVWALQAYGAAYTLREMLTVKSDDIAGRSKMYKNIVDGKLTMNVDVPESFNVLRNEVRALGIDMDFDYSSEEE.

Belongs to the RNA polymerase beta chain family. The RNAP catalytic core consists of 2 alpha, 1 beta, 1 beta' and 1 omega subunit. When a sigma factor is associated with the core the holoenzyme is formed, which can initiate transcription.

It catalyses the reaction RNA(n) + a ribonucleoside 5'-triphosphate = RNA(n+1) + diphosphate. Functionally, DNA-dependent RNA polymerase catalyzes the transcription of DNA into RNA using the four ribonucleoside triphosphates as substrates. This chain is DNA-directed RNA polymerase subunit beta, found in Francisella tularensis subsp. mediasiatica (strain FSC147).